A 214-amino-acid polypeptide reads, in one-letter code: ATP phosphoribosyltransferase (214 aa).

This sequence belongs to the ATP phosphoribosyltransferase family. Short subfamily. Heteromultimer composed of HisG and HisZ subunits.

It localises to the cytoplasm. It catalyses the reaction 1-(5-phospho-beta-D-ribosyl)-ATP + diphosphate = 5-phospho-alpha-D-ribose 1-diphosphate + ATP. The protein operates within amino-acid biosynthesis; L-histidine biosynthesis; L-histidine from 5-phospho-alpha-D-ribose 1-diphosphate: step 1/9. Its function is as follows. Catalyzes the condensation of ATP and 5-phosphoribose 1-diphosphate to form N'-(5'-phosphoribosyl)-ATP (PR-ATP). Has a crucial role in the pathway because the rate of histidine biosynthesis seems to be controlled primarily by regulation of HisG enzymatic activity. The protein is ATP phosphoribosyltransferase of Nostoc punctiforme (strain ATCC 29133 / PCC 73102).